The following is a 233-amino-acid chain: Uracil-DNA glycosylase (233 aa).

The Proton acceptor role is filled by Asp70.

The protein belongs to the uracil-DNA glycosylase (UDG) superfamily. UNG family.

It localises to the cytoplasm. The enzyme catalyses Hydrolyzes single-stranded DNA or mismatched double-stranded DNA and polynucleotides, releasing free uracil.. Its function is as follows. Excises uracil residues from the DNA which can arise as a result of misincorporation of dUMP residues by DNA polymerase or due to deamination of cytosine. The chain is Uracil-DNA glycosylase from Helicobacter pylori (strain P12).